The sequence spans 422 residues: MSSQVFCISTGQTVSVCLPANEDPVEFPGAFFTPNAKKPTVYIKKETDLSLLRSHVYDGIKDGSVTVSQINSYLYMVLKDIREKPDKNWTSFGVELGKKNEPMGIFDLLNVEDVKGKELDKKGQDTRLPGDDLWLPTLIFGLYRVSRATQVEYKKTLMTNLYAQCKLRTKDAEEIVDETAEFFNAWANDSNFTKIVAAVDMYFHHFKKSDHAPIRFGTIVSRFKDCAALSTLSHLQKVTGLPIEEVFTWVFNKSVQDDLLRMMTPGQEIDQADSYMPYLIDMGLSTKSPYSSTKNPSFHFWGQLTAFLVKSARAKNALVPVDIAYHELTTAALLFAYAIGRSSELEQRFVLNGKKFTKEKDSREDNDTTPPSERNVVVWLAWWEDIKHEITPDMKAFAKRAVERVGDIRVNSVAEYARKLFA.

Positions 1-180 are interaction with the phosphoprotein (N0-P); it reads MSSQVFCIST…DAEEIVDETA (180 aa). The segment at 180–320 is oligomerization; it reads AEFFNAWAND…SARAKNALVP (141 aa). Residues 320 to 390 are interaction with the phosphoprotein (N-RNA-P); that stretch reads PVDIAYHELT…AWWEDIKHEI (71 aa). 320-422 serves as a coordination point for RNA; it reads PVDIAYHELT…VAEYARKLFA (103 aa).

Belongs to the vesiculovirus nucleocapsid protein family. In terms of assembly, homomultimerizes to form the nucleocapsid. Binds to viral genomic RNA; this interaction contributes to the virion assembly. N in the nucleocapsid interacts (via C-terminus) with the P protein (via C-terminus); this interaction allows to package the L polymerase in the virion and positions the polymerase on the template, since P acts as a bridge between N and L. N(0) interacts with the P protein; this interaction prevents the uncontrolled aggregation of N(0). Interacts with the matrix protein (inner layer); this interaction contributes to the virion assembly. Interacts with the L polymerase.

It localises to the virion. The protein localises to the host cytoplasm. In terms of biological role, encapsidates the genome in a ratio of one N per nine ribonucleotides, protecting it from nucleases. The encapsidated genomic RNA is termed the NC and serves as template for transcription and replication. The nucleocapsid is bullet-shaped with the tip containing 8 turns of a conical spiral before reaching the helical cylindrical trunk. Nucleocapsid assembly is concomitant with replication, therefore viral replication depends on the intracellular concentration of free N, termed N(0). All replicative products are resistant to nucleases. The protein is Nucleoprotein (N) of Chandipura virus (strain I653514) (CHPV).